Here is a 339-residue protein sequence, read N- to C-terminus: Protein RecA (339 aa).

66-73 (GPESSGKT) lines the ATP pocket.

Belongs to the RecA family.

The protein localises to the cytoplasm. Its function is as follows. Can catalyze the hydrolysis of ATP in the presence of single-stranded DNA, the ATP-dependent uptake of single-stranded DNA by duplex DNA, and the ATP-dependent hybridization of homologous single-stranded DNAs. It interacts with LexA causing its activation and leading to its autocatalytic cleavage. This chain is Protein RecA, found in Geobacter metallireducens (strain ATCC 53774 / DSM 7210 / GS-15).